A 164-amino-acid chain; its full sequence is ATP synthase subunit b (164 aa).

Residues 12-32 traverse the membrane as a helical segment; the sequence is FILVTGSVIVLLLLIKAFAWG.

The protein belongs to the ATPase B chain family. F-type ATPases have 2 components, F(1) - the catalytic core - and F(0) - the membrane proton channel. F(1) has five subunits: alpha(3), beta(3), gamma(1), delta(1), epsilon(1). F(0) has three main subunits: a(1), b(2) and c(10-14). The alpha and beta chains form an alternating ring which encloses part of the gamma chain. F(1) is attached to F(0) by a central stalk formed by the gamma and epsilon chains, while a peripheral stalk is formed by the delta and b chains.

The protein localises to the cell membrane. F(1)F(0) ATP synthase produces ATP from ADP in the presence of a proton or sodium gradient. F-type ATPases consist of two structural domains, F(1) containing the extramembraneous catalytic core and F(0) containing the membrane proton channel, linked together by a central stalk and a peripheral stalk. During catalysis, ATP synthesis in the catalytic domain of F(1) is coupled via a rotary mechanism of the central stalk subunits to proton translocation. In terms of biological role, component of the F(0) channel, it forms part of the peripheral stalk, linking F(1) to F(0). The protein is ATP synthase subunit b of Streptococcus equi subsp. zooepidemicus (strain MGCS10565).